The following is a 235-amino-acid chain: Large ribosomal subunit protein uL3 (235 aa).

Position 151 is an N5-methylglutamine (Q151).

Belongs to the universal ribosomal protein uL3 family. In terms of assembly, part of the 50S ribosomal subunit. Forms a cluster with proteins L14 and L19. Methylated by PrmB.

In terms of biological role, one of the primary rRNA binding proteins, it binds directly near the 3'-end of the 23S rRNA, where it nucleates assembly of the 50S subunit. The polypeptide is Large ribosomal subunit protein uL3 (Rhodospirillum rubrum (strain ATCC 11170 / ATH 1.1.1 / DSM 467 / LMG 4362 / NCIMB 8255 / S1)).